Here is a 259-residue protein sequence, read N- to C-terminus: Tryptophan synthase alpha chain (259 aa).

Catalysis depends on proton acceptor residues Glu48 and Asp59.

Belongs to the TrpA family. As to quaternary structure, tetramer of two alpha and two beta chains.

It catalyses the reaction (1S,2R)-1-C-(indol-3-yl)glycerol 3-phosphate + L-serine = D-glyceraldehyde 3-phosphate + L-tryptophan + H2O. It functions in the pathway amino-acid biosynthesis; L-tryptophan biosynthesis; L-tryptophan from chorismate: step 5/5. The alpha subunit is responsible for the aldol cleavage of indoleglycerol phosphate to indole and glyceraldehyde 3-phosphate. The protein is Tryptophan synthase alpha chain of Syntrophomonas wolfei subsp. wolfei (strain DSM 2245B / Goettingen).